The primary structure comprises 54 residues: UPF0391 membrane protein BAB1_1670 (54 aa).

The next 2 membrane-spanning stretches (helical) occupy residues 5–25 (VLVF…GIAG) and 29–48 (GIAQ…SLIA).

This sequence belongs to the UPF0391 family.

Its subcellular location is the cell membrane. The chain is UPF0391 membrane protein BAB1_1670 from Brucella abortus (strain 2308).